We begin with the raw amino-acid sequence, 319 residues long: Ribonuclease Z (319 aa).

Zn(2+)-binding residues include His62, His64, Asp66, His67, His139, Asp209, and His268. Catalysis depends on Asp66, which acts as the Proton acceptor.

This sequence belongs to the RNase Z family. Homodimer. Zn(2+) serves as cofactor.

The enzyme catalyses Endonucleolytic cleavage of RNA, removing extra 3' nucleotides from tRNA precursor, generating 3' termini of tRNAs. A 3'-hydroxy group is left at the tRNA terminus and a 5'-phosphoryl group is left at the trailer molecule.. In terms of biological role, zinc phosphodiesterase, which displays some tRNA 3'-processing endonuclease activity. Probably involved in tRNA maturation, by removing a 3'-trailer from precursor tRNA. The chain is Ribonuclease Z from Pseudomonas putida (strain ATCC 700007 / DSM 6899 / JCM 31910 / BCRC 17059 / LMG 24140 / F1).